Reading from the N-terminus, the 156-residue chain is Small ribosomal subunit protein uS7 (156 aa).

The protein belongs to the universal ribosomal protein uS7 family. In terms of assembly, part of the 30S ribosomal subunit. Contacts proteins S9 and S11.

One of the primary rRNA binding proteins, it binds directly to 16S rRNA where it nucleates assembly of the head domain of the 30S subunit. Is located at the subunit interface close to the decoding center, probably blocks exit of the E-site tRNA. The sequence is that of Small ribosomal subunit protein uS7 from Prochlorococcus marinus (strain MIT 9211).